The chain runs to 576 residues: V-type ATP synthase alpha chain (576 aa).

Residue 238 to 245 coordinates ATP; it reads GPFGAGKT.

Belongs to the ATPase alpha/beta chains family.

It catalyses the reaction ATP + H2O + 4 H(+)(in) = ADP + phosphate + 5 H(+)(out). Produces ATP from ADP in the presence of a proton gradient across the membrane. The V-type alpha chain is a catalytic subunit. The protein is V-type ATP synthase alpha chain of Borrelia duttonii (strain Ly).